Here is a 474-residue protein sequence, read N- to C-terminus: Glutamate--tRNA ligase (474 aa).

The 'HIGH' region signature appears at 10–20 (PSPTGYLHIGG). Cysteine 107, cysteine 109, cysteine 134, and aspartate 136 together coordinate Zn(2+). The 'KMSKS' region signature appears at 244 to 248 (RLSKR). An ATP-binding site is contributed by lysine 247.

It belongs to the class-I aminoacyl-tRNA synthetase family. Glutamate--tRNA ligase type 1 subfamily. In terms of assembly, monomer. It depends on Zn(2+) as a cofactor.

The protein resides in the cytoplasm. The catalysed reaction is tRNA(Glu) + L-glutamate + ATP = L-glutamyl-tRNA(Glu) + AMP + diphosphate. Functionally, catalyzes the attachment of glutamate to tRNA(Glu) in a two-step reaction: glutamate is first activated by ATP to form Glu-AMP and then transferred to the acceptor end of tRNA(Glu). The polypeptide is Glutamate--tRNA ligase (Anaeromyxobacter dehalogenans (strain 2CP-C)).